The sequence spans 347 residues: Phenylalanine--tRNA ligase alpha subunit (347 aa).

E261 provides a ligand contact to Mg(2+).

This sequence belongs to the class-II aminoacyl-tRNA synthetase family. Phe-tRNA synthetase alpha subunit type 1 subfamily. Tetramer of two alpha and two beta subunits. It depends on Mg(2+) as a cofactor.

The protein localises to the cytoplasm. The enzyme catalyses tRNA(Phe) + L-phenylalanine + ATP = L-phenylalanyl-tRNA(Phe) + AMP + diphosphate + H(+). In Streptococcus pyogenes serotype M1, this protein is Phenylalanine--tRNA ligase alpha subunit.